Here is a 338-residue protein sequence, read N- to C-terminus: uncharacterized protein (338 aa).

The Radical SAM core domain occupies 111–334; it reads HLGEERVLVP…LELAEKYNLD (224 aa). [4Fe-4S] cluster-binding residues include Cys-129, Cys-133, and Cys-136.

The cofactor is [4Fe-4S] cluster.

This is an uncharacterized protein from Methanocaldococcus jannaschii (strain ATCC 43067 / DSM 2661 / JAL-1 / JCM 10045 / NBRC 100440) (Methanococcus jannaschii).